Reading from the N-terminus, the 438-residue chain is Enolase (438 aa).

Positions 159 and 168 each coordinate substrate. Catalysis depends on E211, which acts as the Proton donor. D246, E297, and D322 together coordinate Mg(2+). 2 residues coordinate substrate: E297 and D322. Catalysis depends on K347, which acts as the Proton acceptor. Substrate-binding positions include 374–377 (SHRS) and K398.

The protein belongs to the enolase family. In terms of assembly, homodimer. Mg(2+) is required as a cofactor.

The protein localises to the cytoplasm. The catalysed reaction is (2R)-2-phosphoglycerate = phosphoenolpyruvate + H2O. Its pathway is carbohydrate degradation; glycolysis; pyruvate from D-glyceraldehyde 3-phosphate: step 4/5. The sequence is that of Enolase (ENO) from Alternaria alternata (Alternaria rot fungus).